Reading from the N-terminus, the 215-residue chain is Ras-related protein Rab-5B (215 aa).

Thr2 is subject to N-acetylthreonine. GTP contacts are provided by Ser29, Ala30, Gly32, Lys33, Ser34, Ser35, His46, Glu47, Thr52, and Gly78. Ser34 contacts Mg(2+). 2 short sequence motifs (switch) span residues 44–56 (QFHEYQESTIGAA) and 77–93 (AGQERYHSLAPMYYRGA). Thr52 provides a ligand contact to Mg(2+). Ser84 is modified (phosphoserine; by LRRK2). GTP is bound by residues Asn133, Lys134, Asp136, Ala164, and Lys165. Positions 186 to 215 (PQNLGGAAGRSRGVDLHEQSQQNKSQCCSN) are disordered. The span at 204-215 (QSQQNKSQCCSN) shows a compositional bias: low complexity. S-geranylgeranyl cysteine attachment occurs at residues Cys212 and Cys213.

It belongs to the small GTPase superfamily. Rab family. As to quaternary structure, binds EEA1. Interacts with RIN2 and RIN3, which probably regulate its pathway, possibly by acting as GEFs. Interacts with GDI1, GDI2, CHML and CHM; phosphorylation at Ser-84 disrupts this interaction. It depends on Mg(2+) as a cofactor. Phosphorylation of Ser-84 in the switch II region by LRRK2 prevents the association of RAB regulatory proteins, including CHM, CHML and RAB GDP dissociation inhibitors GDI1 and GDI2. In terms of processing, (Microbial infection) Glycosylated on arginine residues by S.typhimurium protein Ssek3.

It is found in the cell membrane. The protein resides in the early endosome membrane. The protein localises to the melanosome. The catalysed reaction is GTP + H2O = GDP + phosphate + H(+). Regulated by guanine nucleotide exchange factors (GEFs) which promote the exchange of bound GDP for free GTP. Regulated by GTPase activating proteins (GAPs) which increase the GTP hydrolysis activity. Inhibited by GDP dissociation inhibitors (GDIs). Its function is as follows. The small GTPases Rab are key regulators of intracellular membrane trafficking, from the formation of transport vesicles to their fusion with membranes. Rabs cycle between an inactive GDP-bound form and an active GTP-bound form that is able to recruit to membranes different sets of downstream effectors directly responsible for vesicle formation, movement, tethering and fusion. This is Ras-related protein Rab-5B from Homo sapiens (Human).